Reading from the N-terminus, the 330-residue chain is Alpha-1,6-glucosyltransferase (330 aa).

It belongs to the glycosyltransferase group 1 family. It depends on Does not require a metal cofactor. as a cofactor.

The protein resides in the cytoplasm. The protein operates within protein modification; protein glycosylation. Functionally, catalyzes the transfer of a glucose moiety from UDP-glucose to another glucose that is N-linked to an asparagine within a peptide or protein. Can act in a repetitive manner, and this way it elongates the N-linked glucose by a glycan chain consisting of several alpha-1-&gt;6 linked glucose residues. Is able to add up to six glucose units in vitro. Cannot use UDP-Gal, UDP-GlcNAc or UDP-GalNAc as a substrate donor. This Actinobacillus pleuropneumoniae serotype 7 (strain AP76) protein is Alpha-1,6-glucosyltransferase.